A 267-amino-acid polypeptide reads, in one-letter code: MSRIGQVFAEKRSRGEKALIAYTMGGDPNLTFSLEIIKTLAAAGADLIEVGLPFSDPLADGPVIQRAGQRALAAGSGPEEVLALIAAARQELSLPLVIMSYLNPILQIGVDEFLRRAAGAGADGLIIPDLPVEEGEEIRVSAAGYGLDLIPLVAPTTGQKRLEKIVGQASGFIYCVSVTGVTGARDSLPAEVISLLQNVKKLTELPVCLGFGIGKPEQIAYIKDYCDGVIVGSALVEIIENYVQNRMEKDKVLELIATKVQTLKSVS.

Residues Glu-49 and Asp-60 each act as proton acceptor in the active site.

This sequence belongs to the TrpA family. As to quaternary structure, tetramer of two alpha and two beta chains.

It carries out the reaction (1S,2R)-1-C-(indol-3-yl)glycerol 3-phosphate + L-serine = D-glyceraldehyde 3-phosphate + L-tryptophan + H2O. The protein operates within amino-acid biosynthesis; L-tryptophan biosynthesis; L-tryptophan from chorismate: step 5/5. In terms of biological role, the alpha subunit is responsible for the aldol cleavage of indoleglycerol phosphate to indole and glyceraldehyde 3-phosphate. This Carboxydothermus hydrogenoformans (strain ATCC BAA-161 / DSM 6008 / Z-2901) protein is Tryptophan synthase alpha chain.